The following is a 234-amino-acid chain: Phosphoribosylaminoimidazole-succinocarboxamide synthase (234 aa).

This sequence belongs to the SAICAR synthetase family.

It carries out the reaction 5-amino-1-(5-phospho-D-ribosyl)imidazole-4-carboxylate + L-aspartate + ATP = (2S)-2-[5-amino-1-(5-phospho-beta-D-ribosyl)imidazole-4-carboxamido]succinate + ADP + phosphate + 2 H(+). It functions in the pathway purine metabolism; IMP biosynthesis via de novo pathway; 5-amino-1-(5-phospho-D-ribosyl)imidazole-4-carboxamide from 5-amino-1-(5-phospho-D-ribosyl)imidazole-4-carboxylate: step 1/2. The chain is Phosphoribosylaminoimidazole-succinocarboxamide synthase from Clostridium botulinum (strain Langeland / NCTC 10281 / Type F).